A 316-amino-acid polypeptide reads, in one-letter code: Protein YIPF2 (316 aa).

An N-acetylalanine modification is found at alanine 2. The Cytoplasmic portion of the chain corresponds to 2–124 (ASADELTFHE…LRNRPDLYGP (123 aa)). Residues 16–37 (TNLLADTPDAATTSRSDQLTPQ) form a disordered region. A compositionally biased stretch (polar residues) spans 25 to 36 (AATTSRSDQLTP). Residues 125–145 (FWICATLAFVLAVTGNLTLVL) traverse the membrane as a helical segment. At 146 to 163 (AQRRDPSIHYSPQFHKVT) the chain is on the lumenal side. Residues 164–184 (VAGISIYCYAWLVPLALWGFL) traverse the membrane as a helical segment. At 185–196 (RWRKGVQERMGP) the chain is on the cytoplasmic side. The helical transmembrane segment at 197 to 219 (YTFLETVCIYGYSLFVFIPMVVL) threads the bilayer. Residues 220 to 231 (WLIPVPWLQWLF) lie on the Lumenal side of the membrane. Residues 232–252 (GALALGLSAAGLVFTLWPVVR) traverse the membrane as a helical segment. Over 253-256 (EDTR) the chain is Cytoplasmic. The chain crosses the membrane as a helical span at residues 257–277 (LVATVLLSVVVLLHALLAMGC). Residues 278-316 (KLYFFQSLPPENVAPPPQITSLPSNIALSPTLPQSLAPS) are Lumenal-facing.

This sequence belongs to the YIP1 family. In terms of assembly, interacts with YIPF6; this interaction may stabilize YIPF2. May also form a ternary complex with YIPF1 and YIPF6.

The protein resides in the golgi apparatus. It localises to the cis-Golgi network membrane. Its subcellular location is the trans-Golgi network membrane. It is found in the late endosome membrane. This chain is Protein YIPF2 (YIPF2), found in Homo sapiens (Human).